A 535-amino-acid chain; its full sequence is Dual specificity calcium/calmodulin-dependent 3',5'-cyclic nucleotide phosphodiesterase 1B (535 aa).

A disordered region spans residues 1–21 (MELSPRSPPEMLESDCPSPLE). Phosphoserine occurs at positions 7 and 14. Calmodulin-binding stretches follow at residues 27-47 (SKKMWIKLRSLLRYMVKQLEN) and 117-140 (EKPKFRSIVHAVQAGIFVERMFRR). The 358-residue stretch at 145–502 (VGPTYSTAVH…QKWKERAASG (358 aa)) folds into the PDEase domain. The active-site Proton donor is the His222. The Zn(2+) site is built by His226, His262, Asp263, and Asp369. Residue Asp263 participates in Mg(2+) binding. Disordered regions lie at residues 444-474 (QPLADDDSKPKSQPSFQWRQPSLDVDVGDPN) and 495-535 (WKER…GNLD). Over residues 454 to 463 (KSQPSFQWRQ) the composition is skewed to polar residues. A phosphoserine mark is found at Ser465 and Ser513.

It belongs to the cyclic nucleotide phosphodiesterase family. PDE1 subfamily. As to quaternary structure, homodimer. The cofactor is Zn(2+). Requires Mg(2+) as cofactor.

It localises to the cytoplasm. It is found in the cytosol. It catalyses the reaction a nucleoside 3',5'-cyclic phosphate + H2O = a nucleoside 5'-phosphate + H(+). It carries out the reaction 3',5'-cyclic GMP + H2O = GMP + H(+). The catalysed reaction is 3',5'-cyclic AMP + H2O = AMP + H(+). Its activity is regulated as follows. Type I PDE are activated by the binding of calmodulin in the presence of Ca(2+). Cyclic nucleotide phosphodiesterase with a dual specificity for the second messengers cAMP and cGMP, which are key regulators of many important physiological processes. Has a preference for cGMP as a substrate. In Mus musculus (Mouse), this protein is Dual specificity calcium/calmodulin-dependent 3',5'-cyclic nucleotide phosphodiesterase 1B.